A 49-amino-acid polypeptide reads, in one-letter code: DNA-directed RNA polymerase subunit Rpo12 (49 aa).

Residues Cys-11, Cys-27, and Cys-30 each coordinate Zn(2+).

It belongs to the archaeal Rpo12/eukaryotic RPC10 RNA polymerase subunit family. As to quaternary structure, part of the RNA polymerase complex. Zn(2+) serves as cofactor.

The protein resides in the cytoplasm. The catalysed reaction is RNA(n) + a ribonucleoside 5'-triphosphate = RNA(n+1) + diphosphate. DNA-dependent RNA polymerase (RNAP) catalyzes the transcription of DNA into RNA using the four ribonucleoside triphosphates as substrates. This Thermococcus onnurineus (strain NA1) protein is DNA-directed RNA polymerase subunit Rpo12.